The chain runs to 669 residues: UvrABC system protein B (669 aa).

Residues 26–414 form the Helicase ATP-binding domain; sequence EGLEDGLAHQ…SGDVVEQVVR (389 aa). 39-46 contributes to the ATP binding site; sequence GVTGSGKT. The Beta-hairpin signature appears at 92–115; the sequence is YYDYYQPEAYVPSSDTFIEKDASV. Residues 431–597 enclose the Helicase C-terminal domain; sequence QVDDLLSEIR…GLNKKINDIL (167 aa). In terms of domain architecture, UVR spans 629-664; sequence ESKIRELEAKMYQHAQDLEFEQAASVRDQVQALREQ.

The protein belongs to the UvrB family. Forms a heterotetramer with UvrA during the search for lesions. Interacts with UvrC in an incision complex.

The protein resides in the cytoplasm. In terms of biological role, the UvrABC repair system catalyzes the recognition and processing of DNA lesions. A damage recognition complex composed of 2 UvrA and 2 UvrB subunits scans DNA for abnormalities. Upon binding of the UvrA(2)B(2) complex to a putative damaged site, the DNA wraps around one UvrB monomer. DNA wrap is dependent on ATP binding by UvrB and probably causes local melting of the DNA helix, facilitating insertion of UvrB beta-hairpin between the DNA strands. Then UvrB probes one DNA strand for the presence of a lesion. If a lesion is found the UvrA subunits dissociate and the UvrB-DNA preincision complex is formed. This complex is subsequently bound by UvrC and the second UvrB is released. If no lesion is found, the DNA wraps around the other UvrB subunit that will check the other stand for damage. The sequence is that of UvrABC system protein B from Photorhabdus laumondii subsp. laumondii (strain DSM 15139 / CIP 105565 / TT01) (Photorhabdus luminescens subsp. laumondii).